The sequence spans 275 residues: Rhamnulose-1-phosphate aldolase (275 aa).

Glutamate 117 is an active-site residue. 3 residues coordinate Zn(2+): histidine 141, histidine 143, and histidine 212.

This sequence belongs to the aldolase class II family. RhaD subfamily. As to quaternary structure, homotetramer. It depends on Zn(2+) as a cofactor.

The protein localises to the cytoplasm. It catalyses the reaction L-rhamnulose 1-phosphate = (S)-lactaldehyde + dihydroxyacetone phosphate. It participates in carbohydrate degradation; L-rhamnose degradation; glycerone phosphate from L-rhamnose: step 3/3. Catalyzes the reversible cleavage of L-rhamnulose-1-phosphate to dihydroxyacetone phosphate (DHAP) and L-lactaldehyde. The protein is Rhamnulose-1-phosphate aldolase of Salmonella heidelberg (strain SL476).